Here is a 766-residue protein sequence, read N- to C-terminus: 5-methyltetrahydropteroyltriglutamate--homocysteine methyltransferase (766 aa).

Residues 16–19 (RELK) and Lys-122 contribute to the 5-methyltetrahydropteroyltri-L-glutamate site. L-homocysteine-binding positions include 443–445 (IGS) and Glu-496. Residues 443-445 (IGS) and Glu-496 each bind L-methionine. Residues 527 to 528 (RC) and Trp-573 each bind 5-methyltetrahydropteroyltri-L-glutamate. L-homocysteine is bound at residue Asp-611. Asp-611 is an L-methionine binding site. Position 617 (Glu-617) interacts with 5-methyltetrahydropteroyltri-L-glutamate. Zn(2+)-binding residues include His-653, Cys-655, and Glu-677. His-706 acts as the Proton donor in catalysis. Residue Cys-738 participates in Zn(2+) binding.

This sequence belongs to the vitamin-B12 independent methionine synthase family. Requires Zn(2+) as cofactor.

It catalyses the reaction 5-methyltetrahydropteroyltri-L-glutamate + L-homocysteine = tetrahydropteroyltri-L-glutamate + L-methionine. It functions in the pathway amino-acid biosynthesis; L-methionine biosynthesis via de novo pathway; L-methionine from L-homocysteine (MetE route): step 1/1. Functionally, catalyzes the transfer of a methyl group from 5-methyltetrahydrofolate to homocysteine resulting in methionine formation. This chain is 5-methyltetrahydropteroyltriglutamate--homocysteine methyltransferase, found in Pseudomonas putida (strain W619).